We begin with the raw amino-acid sequence, 297 residues long: HTH-type transcriptional regulator ArgP (297 aa).

Positions Pro4–Thr60 constitute an HTH lysR-type domain. The segment at residues Phe21–Lys40 is a DNA-binding region (H-T-H motif).

Belongs to the LysR transcriptional regulatory family. Homodimer.

In terms of biological role, controls the transcription of genes involved in arginine and lysine metabolism. This is HTH-type transcriptional regulator ArgP from Escherichia fergusonii (strain ATCC 35469 / DSM 13698 / CCUG 18766 / IAM 14443 / JCM 21226 / LMG 7866 / NBRC 102419 / NCTC 12128 / CDC 0568-73).